The primary structure comprises 234 residues: Large ribosomal subunit protein bL25 (234 aa).

The disordered stretch occupies residues 1–24 (MATVMELKATARPKSGKGAARAER).

Belongs to the bacterial ribosomal protein bL25 family. CTC subfamily. In terms of assembly, part of the 50S ribosomal subunit; part of the 5S rRNA/L5/L18/L25 subcomplex. Contacts the 5S rRNA. Binds to the 5S rRNA independently of L5 and L18.

In terms of biological role, this is one of the proteins that binds to the 5S RNA in the ribosome where it forms part of the central protuberance. The polypeptide is Large ribosomal subunit protein bL25 (Rhodopseudomonas palustris (strain BisB5)).